We begin with the raw amino-acid sequence, 419 residues long: Imidazolonepropionase (419 aa).

His87 and His89 together coordinate Fe(3+). Zn(2+)-binding residues include His87 and His89. 3 residues coordinate 4-imidazolone-5-propanoate: Arg96, Tyr159, and His192. An N-formimidoyl-L-glutamate-binding site is contributed by Tyr159. Fe(3+) is bound at residue His257. His257 provides a ligand contact to Zn(2+). Residue Gln260 coordinates 4-imidazolone-5-propanoate. Asp332 lines the Fe(3+) pocket. Position 332 (Asp332) interacts with Zn(2+). N-formimidoyl-L-glutamate-binding residues include Asn334 and Gly336. A 4-imidazolone-5-propanoate-binding site is contributed by Ser337.

It belongs to the metallo-dependent hydrolases superfamily. HutI family. Zn(2+) is required as a cofactor. It depends on Fe(3+) as a cofactor.

Its subcellular location is the cytoplasm. It carries out the reaction 4-imidazolone-5-propanoate + H2O = N-formimidoyl-L-glutamate. The protein operates within amino-acid degradation; L-histidine degradation into L-glutamate; N-formimidoyl-L-glutamate from L-histidine: step 3/3. Functionally, catalyzes the hydrolytic cleavage of the carbon-nitrogen bond in imidazolone-5-propanoate to yield N-formimidoyl-L-glutamate. It is the third step in the universal histidine degradation pathway. The polypeptide is Imidazolonepropionase (Alteromonas mediterranea (strain DSM 17117 / CIP 110805 / LMG 28347 / Deep ecotype)).